Consider the following 264-residue polypeptide: Aminoglycoside 3'-phosphotransferase (264 aa).

The Proton acceptor role is filled by D190.

It belongs to the aminoglycoside phosphotransferase family.

The catalysed reaction is kanamycin A + ATP = kanamycin 3'-phosphate + ADP + H(+). In terms of biological role, resistance to kanamycin and structurally-related aminoglycosides, including amikacin. This is Aminoglycoside 3'-phosphotransferase (aphA) from Enterococcus faecalis (Streptococcus faecalis).